The primary structure comprises 283 residues: NAD kinase (283 aa).

The active-site Proton acceptor is the aspartate 67. NAD(+) is bound by residues 67-68 (DG), arginine 72, 136-137 (NE), lysine 147, arginine 164, aspartate 166, 177-182 (TAYSMS), and glutamine 236.

Belongs to the NAD kinase family. A divalent metal cation serves as cofactor.

It is found in the cytoplasm. The enzyme catalyses NAD(+) + ATP = ADP + NADP(+) + H(+). Involved in the regulation of the intracellular balance of NAD and NADP, and is a key enzyme in the biosynthesis of NADP. Catalyzes specifically the phosphorylation on 2'-hydroxyl of the adenosine moiety of NAD to yield NADP. The chain is NAD kinase from Methanothermobacter thermautotrophicus (strain ATCC 29096 / DSM 1053 / JCM 10044 / NBRC 100330 / Delta H) (Methanobacterium thermoautotrophicum).